A 332-amino-acid chain; its full sequence is Putative ketol-acid reductoisomerase 3 (332 aa).

One can recognise a KARI N-terminal Rossmann domain in the interval 1–182 (MDKTVLDASL…AIPGGIAVIS (182 aa)). Positions 183–329 (SFEEEALLDL…KELYKILRRK (147 aa)) constitute a KARI C-terminal knotted domain.

Belongs to the ketol-acid reductoisomerase family.

It catalyses the reaction (2R)-2,3-dihydroxy-3-methylbutanoate + NADP(+) = (2S)-2-acetolactate + NADPH + H(+). It carries out the reaction (2R,3R)-2,3-dihydroxy-3-methylpentanoate + NADP(+) = (S)-2-ethyl-2-hydroxy-3-oxobutanoate + NADPH + H(+). It functions in the pathway amino-acid biosynthesis; L-isoleucine biosynthesis; L-isoleucine from 2-oxobutanoate: step 2/4. It participates in amino-acid biosynthesis; L-valine biosynthesis; L-valine from pyruvate: step 2/4. In Saccharolobus solfataricus (strain ATCC 35092 / DSM 1617 / JCM 11322 / P2) (Sulfolobus solfataricus), this protein is Putative ketol-acid reductoisomerase 3 (ilvC3).